The following is a 212-amino-acid chain: uncharacterized protein (212 aa).

The SIS domain maps to 46 to 198; the sequence is LERVYREKRK…IYSLMTRLGI (153 aa).

It belongs to the SIS family. PHI subfamily.

This is an uncharacterized protein from Aeropyrum pernix (strain ATCC 700893 / DSM 11879 / JCM 9820 / NBRC 100138 / K1).